We begin with the raw amino-acid sequence, 265 residues long: MKVAIVHNSEEKSKQVTKQLTTLLEQNQIQIDNRQPELVISVGGDGTLLSAFHRFNHLLNEVSFLGVHTGHLGFYTDWRDYELKELVESLCIHREKSTSYPLLDVRIRFRDGKPDKHFLALNESTIKRGNRTMVGDVFIKDELFERFRGDGLSISTPTGSTAYNKSIGGAVLHPSINAFQLTEIASLNNRVFRTLGSPIVIAHTEWLEIKLQESDDYFVTVDQLDIYQENIASVCYRIADERIHFASYRHMHFWHRVKDAFIGED.

Catalysis depends on D45, which acts as the Proton acceptor. NAD(+)-binding positions include 45–46 (DG), 122–123 (NE), R148, D150, 161–166 (TAYNKS), A185, and Q223.

Belongs to the NAD kinase family. Requires a divalent metal cation as cofactor.

It localises to the cytoplasm. It carries out the reaction NAD(+) + ATP = ADP + NADP(+) + H(+). Functionally, involved in the regulation of the intracellular balance of NAD and NADP, and is a key enzyme in the biosynthesis of NADP. Catalyzes specifically the phosphorylation on 2'-hydroxyl of the adenosine moiety of NAD to yield NADP. This Enterococcus faecalis (strain ATCC 700802 / V583) protein is NAD kinase.